A 148-amino-acid chain; its full sequence is UPF0756 membrane protein YeaL (148 aa).

The next 4 membrane-spanning stretches (helical) occupy residues A14–V34, L51–L71, L86–M106, and V121–V141.

It belongs to the UPF0756 family.

It is found in the cell membrane. The chain is UPF0756 membrane protein YeaL from Escherichia coli (strain B / REL606).